The primary structure comprises 334 residues: TPR repeat-containing protein MJ0798 (334 aa).

TPR repeat units follow at residues 102–135 (WKLW…NQNT), 137–168 (LLCK…DRNN), 169–202 (YKAL…NPND), 204–235 (EALE…KPDD), 236–269 (IDLI…NPNV), 273–306 (EQIY…NLYH), and 308–333 (EIYE…YKKL).

This chain is TPR repeat-containing protein MJ0798, found in Methanocaldococcus jannaschii (strain ATCC 43067 / DSM 2661 / JAL-1 / JCM 10045 / NBRC 100440) (Methanococcus jannaschii).